The sequence spans 321 residues: Torsin-2A (321 aa).

A signal peptide spans 1–27 (MAVARHGCPPWGSILGLLVLALAAAAA). 93 to 100 (GWTGTGKS) is a binding site for ATP. Asparagine 149 carries N-linked (GlcNAc...) asparagine glycosylation.

This sequence belongs to the ClpA/ClpB family. Torsin subfamily. In terms of assembly, homohexamer. Interacts with TOR1AIP1.

Its subcellular location is the endoplasmic reticulum lumen. The protein is Torsin-2A (Tor2a) of Rattus norvegicus (Rat).